The sequence spans 238 residues: DNA repair protein RecO (238 aa).

This sequence belongs to the RecO family.

Functionally, involved in DNA repair and RecF pathway recombination. This Anaplasma marginale (strain St. Maries) protein is DNA repair protein RecO.